A 228-amino-acid polypeptide reads, in one-letter code: PKHD-type hydroxylase Reut_A2877 (228 aa).

The Fe2OG dioxygenase domain occupies 80-180 (IVYPPMFNRY…RVASFFWIQS (101 aa)). Residues histidine 98, aspartate 100, and histidine 161 each coordinate Fe cation. Arginine 171 is a 2-oxoglutarate binding site.

The cofactor is Fe(2+). It depends on L-ascorbate as a cofactor.

The chain is PKHD-type hydroxylase Reut_A2877 from Cupriavidus pinatubonensis (strain JMP 134 / LMG 1197) (Cupriavidus necator (strain JMP 134)).